We begin with the raw amino-acid sequence, 589 residues long: Transcription factor 4 (589 aa).

Disordered regions lie at residues 1–124 (MTSR…SSSK), 138–163 (DGHH…MLGN), 184–239 (PSHS…SQTG), 254–297 (HTNN…EGPL), 384–492 (SLLP…MANN), and 556–589 (KRRE…MGQM). 2 positions are modified to phosphoserine: serine 8 and serine 13. Polar residues predominate over residues 56-74 (GTLSPTKPGSQYYPYSSNN). Residues 136 to 157 (MQDGHHSSDPWSSSSGMNQPGY) are leucine-zipper. Residues 184-224 (PSHSSADINSSLPPMSTFHRSGTNHYSTSSCTPPANGTDSI) show a composition bias toward polar residues. Residues 255 to 266 (TNNSFSSNPSTP) are compositionally biased toward low complexity. The span at 283-292 (NGGQASSSPN) shows a compositional bias: polar residues. Serine 290 carries the phosphoserine modification. The interval 380-403 (RGSHSLLPNQVPVPQLPVQSATSP) is class A specific domain. Composition is skewed to low complexity over residues 385 to 398 (LLPN…LPVQ) and 421 to 430 (GQSVSSGSSE). At serine 433 the chain carries Phosphoserine. 2 stretches are compositionally biased toward basic and acidic residues: residues 445-461 (KSSE…DIKS) and 477-492 (PEQK…MANN). Positions 486 to 539 (ERRMANNARERLRVRDINEAFKELGRMVQLHLKSDKPQTKLLILHQAVAVILSL) constitute a bHLH domain.

In terms of assembly, efficient DNA binding requires dimerization with another bHLH protein. Forms homo- or heterooligomers with myogenin. Interacts with HIVEP2. Interacts with NEUROD2. Interacts with AGBL1.

It is found in the nucleus. In terms of biological role, transcription factor that binds to the immunoglobulin enhancer Mu-E5/KE5-motif. Involved in the initiation of neuronal differentiation. Activates transcription by binding to the E box (5'-CANNTG-3'). Binds to the E-box present in the somatostatin receptor 2 initiator element (SSTR2-INR) to activate transcription. Interacts with the CCAAT displacement protein (CDP2) to bind the tyrosine hydroxylase enhancer. This is Transcription factor 4 (Tcf4) from Rattus norvegicus (Rat).